The sequence spans 309 residues: HPr kinase/phosphorylase (309 aa).

Residues H138 and K159 contribute to the active site. Residue 153 to 160 coordinates ATP; it reads GQSGVGKS. S160 lines the Mg(2+) pocket. D177 acts as the Proton acceptor; for phosphorylation activity. Proton donor; for dephosphorylation activity in catalysis. The interval 201 to 210 is important for the catalytic mechanism of both phosphorylation and dephosphorylation; it reads LEIRGLGIIN. E202 contributes to the Mg(2+) binding site. R243 is a catalytic residue. The segment at 264–269 is important for the catalytic mechanism of dephosphorylation; that stretch reads PVRPGR.

The protein belongs to the HPrK/P family. As to quaternary structure, homohexamer. Mg(2+) serves as cofactor.

The enzyme catalyses [HPr protein]-L-serine + ATP = [HPr protein]-O-phospho-L-serine + ADP + H(+). It catalyses the reaction [HPr protein]-O-phospho-L-serine + phosphate + H(+) = [HPr protein]-L-serine + diphosphate. Functionally, catalyzes the ATP- as well as the pyrophosphate-dependent phosphorylation of a specific serine residue in HPr, a phosphocarrier protein of the phosphoenolpyruvate-dependent sugar phosphotransferase system (PTS). HprK/P also catalyzes the pyrophosphate-producing, inorganic phosphate-dependent dephosphorylation (phosphorolysis) of seryl-phosphorylated HPr (P-Ser-HPr). The two antagonistic activities of HprK/P are regulated by several intracellular metabolites, which change their concentration in response to the absence or presence of rapidly metabolisable carbon sources (glucose, fructose, etc.) in the growth medium. Also phosphorylates/dephosphorylates the HPr-like catabolite repression protein crh on a specific serine residue. Therefore, by controlling the phosphorylation state of HPr and crh, HPrK/P is a sensor enzyme that plays a major role in the regulation of carbon metabolism and sugar transport: it mediates carbon catabolite repression (CCR), and regulates PTS-catalyzed carbohydrate uptake and inducer exclusion. The sequence is that of HPr kinase/phosphorylase from Bacillus cereus (strain G9842).